A 169-amino-acid chain; its full sequence is PTS system glucose-specific EIIA component (169 aa).

The 105-residue stretch at 39–143 (DVVFAEKIVG…STLTPVVISN (105 aa)) folds into the PTS EIIA type-1 domain. Zn(2+) is bound by residues histidine 76 and histidine 91. The active-site Tele-phosphohistidine intermediate; for EIIA activity is the histidine 91. Histidine 91 carries the post-translational modification Phosphohistidine; by HPr.

In terms of assembly, heterodimer with glycerol kinase (glpk). It depends on Zn(2+) as a cofactor.

Its subcellular location is the cytoplasm. The phosphoenolpyruvate-dependent sugar phosphotransferase system (sugar PTS), a major carbohydrate active transport system, catalyzes the phosphorylation of incoming sugar substrates concomitantly with their translocation across the cell membrane. The enzyme II complex composed of PtsG and Crr is involved in glucose transport. This Salmonella typhi protein is PTS system glucose-specific EIIA component (crr).